We begin with the raw amino-acid sequence, 750 residues long: Dual specificity tyrosine-phosphorylation-regulated kinase 1A (750 aa).

Disordered stretches follow at residues 56-81 (ALPYNDQTPQPLPNQRRMPQTFRDPA) and 104-129 (YAKKKRRHQQGQGDDSSHKKERKVYN). Residues 109 to 126 (RRHQQGQGDDSSHKKERK) carry the Bipartite nuclear localization signal motif. In terms of domain architecture, Protein kinase spans 151 to 471 (YEIDSLIGKG…PYYALQHSFF (321 aa)). Residues 157–165 (IGKGSFGQV), lysine 180, and 230–233 (FEML) contribute to the ATP site. The Proton acceptor role is filled by aspartate 279. Disordered regions lie at residues 400-434 (TKDGKKEYKPPGTRKLHNILGVENGGPGGRRAGES), 477-531 (EGTN…RHSG), 583-666 (SQKN…GNQA), and 731-750 (DREDSPMTGVCVQQSPVASS). A compositionally biased stretch (polar residues) spans 477-493 (EGTNTSNSVSTSPAMEQ). A compositionally biased stretch (low complexity) spans 494 to 517 (SQSSGTTSSTSSSSGGSSGTSNSG). Residues 584–612 (QKNVPHHHGNGSHHHHHHHHHHHGQHILS) form a histidine-rich domain (HRD) region. Over residues 587 to 608 (VPHHHGNGSHHHHHHHHHHHGQ) the composition is skewed to basic residues. Polar residues predominate over residues 610–621 (ILSNRTRTRIYN). A compositionally biased stretch (low complexity) spans 622–659 (SPSTSSSTQDSMDIGNSHHSMTSLSSSTTSSSTSSSST). Polar residues predominate over residues 741–750 (CVQQSPVASS).

The protein belongs to the protein kinase superfamily. CMGC Ser/Thr protein kinase family. MNB/DYRK subfamily. In terms of processing, autophosphorylated on tyrosine residues.

The protein resides in the nucleus. The protein localises to the nucleus speckle. The enzyme catalyses L-seryl-[protein] + ATP = O-phospho-L-seryl-[protein] + ADP + H(+). The catalysed reaction is L-threonyl-[protein] + ATP = O-phospho-L-threonyl-[protein] + ADP + H(+). It catalyses the reaction L-tyrosyl-[protein] + ATP = O-phospho-L-tyrosyl-[protein] + ADP + H(+). It carries out the reaction [DNA-directed RNA polymerase] + ATP = phospho-[DNA-directed RNA polymerase] + ADP + H(+). Dual-specificity kinase which possesses both serine/threonine and tyrosine kinase activities. Exhibits a substrate preference for proline at position P+1 and arginine at position P-3. Plays an important role in double-strand breaks (DSBs) repair following DNA damage. Mechanistically, phosphorylates RNF169 and increases its ability to block accumulation of TP53BP1 at the DSB sites thereby promoting homologous recombination repair (HRR). Also acts as a positive regulator of transcription by acting as a CTD kinase that mediates phosphorylation of the CTD (C-terminal domain) of the large subunit of RNA polymerase II (RNAP II) POLR2A. Modulates alternative splicing by phosphorylating the splice factor SRSF6. Phosphorylates SEPTIN4, SEPTIN5 and SF3B1. The chain is Dual specificity tyrosine-phosphorylation-regulated kinase 1A from Xenopus laevis (African clawed frog).